We begin with the raw amino-acid sequence, 464 residues long: Ribosomal protein uS12 methylthiotransferase RimO (464 aa).

One can recognise an MTTase N-terminal domain in the interval 14–125 (PTVAFAHLGC…IVEVLQRVEA (112 aa)). 6 residues coordinate [4Fe-4S] cluster: Cys-23, Cys-59, Cys-88, Cys-163, Cys-167, and Cys-170. The region spanning 149-378 (TTDQAVAFLK…MALQQPISAE (230 aa)) is the Radical SAM core domain. Residues 381–452 (HSWVSRTVDV…VYDLSGRIVG (72 aa)) form the TRAM domain.

Belongs to the methylthiotransferase family. RimO subfamily. The cofactor is [4Fe-4S] cluster.

Its subcellular location is the cytoplasm. The enzyme catalyses L-aspartate(89)-[ribosomal protein uS12]-hydrogen + (sulfur carrier)-SH + AH2 + 2 S-adenosyl-L-methionine = 3-methylsulfanyl-L-aspartate(89)-[ribosomal protein uS12]-hydrogen + (sulfur carrier)-H + 5'-deoxyadenosine + L-methionine + A + S-adenosyl-L-homocysteine + 2 H(+). Its function is as follows. Catalyzes the methylthiolation of an aspartic acid residue of ribosomal protein uS12. The polypeptide is Ribosomal protein uS12 methylthiotransferase RimO (Parasynechococcus marenigrum (strain WH8102)).